A 218-amino-acid polypeptide reads, in one-letter code: MPMILGYWNVRGLTHPIRLLLEYTDSSYEEKRYAMGDAPDYDRSQWLNEKFKLGLDFPNLPYLIDGSRKITQSNAIMRYLARKHHLCGETEEERIRADIVENQVMDNRMQLIMLCYNPDFEKQKPEFLKTIPEKMKLYSEFLGKRPWFAGDKVTYVDFLAYDILDQYHIFEPKCLDAFPNLKDFLARFEGLKKISAYMKSSRYLSTPIFSKLAQWSNK.

The 87-residue stretch at 2-88 (PMILGYWNVR…YLARKHHLCG (87 aa)) folds into the GST N-terminal domain. Residues 7 to 8 (YW), 43 to 46 (RSQW), lysine 50, and 59 to 60 (NL) contribute to the glutathione site. A Phosphoserine modification is found at serine 67. 72–73 (QS) serves as a coordination point for glutathione. In terms of domain architecture, GST C-terminal spans 90 to 208 (TEEERIRADI…KSSRYLSTPI (119 aa)). Tyrosine 116 is a substrate binding site. 2 positions are modified to phosphoserine: serine 205 and serine 210.

Belongs to the GST superfamily. Mu family. In terms of assembly, homodimer or heterodimer.

Its subcellular location is the cytoplasm. The catalysed reaction is RX + glutathione = an S-substituted glutathione + a halide anion + H(+). It carries out the reaction prostaglandin A2 + glutathione = prostaglandin A2-S-(R)-glutathione. The enzyme catalyses prostaglandin J2 + glutathione = prostaglandin J2-S-(R)-glutathione. It catalyses the reaction prostaglandin J2 + glutathione = prostaglandin J2-S-(S)-glutathione. The catalysed reaction is prostaglandin A2 + glutathione = prostaglandin A2-S-(S)-glutathione. It carries out the reaction 11(S)-hydroxy-14(S),15(S)-epoxy-(5Z,8Z,12E)-eicosatrienoate + glutathione = (11S,15S)-dihydroxy-14(R)-S-glutathionyl-(5Z,8Z,12E)-eicosatrienoate. Conjugation of reduced glutathione to a wide number of exogenous and endogenous hydrophobic electrophiles. The olfactory GST may be crucial for the acuity of the olfactory process. Participates in the formation of novel hepoxilin regioisomers. This is Glutathione S-transferase Mu 1 from Rattus norvegicus (Rat).